Here is a 181-residue protein sequence, read N- to C-terminus: Large ribosomal subunit protein uL5 (181 aa).

Belongs to the universal ribosomal protein uL5 family. As to quaternary structure, part of the 50S ribosomal subunit; part of the 5S rRNA/L5/L18/L25 subcomplex. Contacts the 5S rRNA and the P site tRNA. Forms a bridge to the 30S subunit in the 70S ribosome.

Functionally, this is one of the proteins that bind and probably mediate the attachment of the 5S RNA into the large ribosomal subunit, where it forms part of the central protuberance. In the 70S ribosome it contacts protein S13 of the 30S subunit (bridge B1b), connecting the 2 subunits; this bridge is implicated in subunit movement. Contacts the P site tRNA; the 5S rRNA and some of its associated proteins might help stabilize positioning of ribosome-bound tRNAs. This Helicobacter pylori (strain G27) protein is Large ribosomal subunit protein uL5.